The sequence spans 284 residues: Bifunctional protein FolD (284 aa).

Residues 165–167, S190, and V231 each bind NADP(+); that span reads GRS.

Belongs to the tetrahydrofolate dehydrogenase/cyclohydrolase family. Homodimer.

The enzyme catalyses (6R)-5,10-methylene-5,6,7,8-tetrahydrofolate + NADP(+) = (6R)-5,10-methenyltetrahydrofolate + NADPH. It catalyses the reaction (6R)-5,10-methenyltetrahydrofolate + H2O = (6R)-10-formyltetrahydrofolate + H(+). It participates in one-carbon metabolism; tetrahydrofolate interconversion. Its function is as follows. Catalyzes the oxidation of 5,10-methylenetetrahydrofolate to 5,10-methenyltetrahydrofolate and then the hydrolysis of 5,10-methenyltetrahydrofolate to 10-formyltetrahydrofolate. In Ruminiclostridium cellulolyticum (strain ATCC 35319 / DSM 5812 / JCM 6584 / H10) (Clostridium cellulolyticum), this protein is Bifunctional protein FolD.